A 374-amino-acid polypeptide reads, in one-letter code: Alanine racemase (374 aa).

The active-site Proton acceptor; specific for D-alanine is the K35. K35 bears the N6-(pyridoxal phosphate)lysine mark. R133 lines the substrate pocket. Y261 acts as the Proton acceptor; specific for L-alanine in catalysis. A substrate-binding site is contributed by M315.

Belongs to the alanine racemase family. It depends on pyridoxal 5'-phosphate as a cofactor.

It catalyses the reaction L-alanine = D-alanine. The protein operates within amino-acid biosynthesis; D-alanine biosynthesis; D-alanine from L-alanine: step 1/1. Functionally, catalyzes the interconversion of L-alanine and D-alanine. May also act on other amino acids. This is Alanine racemase (alr) from Psychrobacter sp. (strain PRwf-1).